Reading from the N-terminus, the 262-residue chain is Tryptophan synthase alpha chain (262 aa).

Active-site proton acceptor residues include glutamate 52 and aspartate 63.

This sequence belongs to the TrpA family. In terms of assembly, tetramer of two alpha and two beta chains.

The catalysed reaction is (1S,2R)-1-C-(indol-3-yl)glycerol 3-phosphate + L-serine = D-glyceraldehyde 3-phosphate + L-tryptophan + H2O. It participates in amino-acid biosynthesis; L-tryptophan biosynthesis; L-tryptophan from chorismate: step 5/5. The alpha subunit is responsible for the aldol cleavage of indoleglycerol phosphate to indole and glyceraldehyde 3-phosphate. The sequence is that of Tryptophan synthase alpha chain from Mycobacteroides abscessus (strain ATCC 19977 / DSM 44196 / CCUG 20993 / CIP 104536 / JCM 13569 / NCTC 13031 / TMC 1543 / L948) (Mycobacterium abscessus).